The primary structure comprises 136 residues: Large ribosomal subunit protein bL17 (136 aa).

This sequence belongs to the bacterial ribosomal protein bL17 family. In terms of assembly, part of the 50S ribosomal subunit. Contacts protein L32.

The protein is Large ribosomal subunit protein bL17 of Rickettsia canadensis (strain McKiel).